The primary structure comprises 317 residues: Tyrosine--tRNA ligase (317 aa).

L-tyrosine is bound at residue Tyr-32. Residues Pro-37–His-45 carry the 'HIGH' region motif. L-tyrosine is bound by residues Tyr-152, Gln-156, Asp-159, and Gln-174. Residues Lys-208–Ser-212 carry the 'KMSKS' region motif. Ser-211 serves as a coordination point for ATP.

This sequence belongs to the class-I aminoacyl-tRNA synthetase family. TyrS type 3 subfamily. As to quaternary structure, homodimer.

Its subcellular location is the cytoplasm. It catalyses the reaction tRNA(Tyr) + L-tyrosine + ATP = L-tyrosyl-tRNA(Tyr) + AMP + diphosphate + H(+). Functionally, catalyzes the attachment of tyrosine to tRNA(Tyr) in a two-step reaction: tyrosine is first activated by ATP to form Tyr-AMP and then transferred to the acceptor end of tRNA(Tyr). The polypeptide is Tyrosine--tRNA ligase (Methanocorpusculum labreanum (strain ATCC 43576 / DSM 4855 / Z)).